We begin with the raw amino-acid sequence, 296 residues long: Phosphoribosylaminoimidazole-succinocarboxamide synthase (296 aa).

This sequence belongs to the SAICAR synthetase family.

The enzyme catalyses 5-amino-1-(5-phospho-D-ribosyl)imidazole-4-carboxylate + L-aspartate + ATP = (2S)-2-[5-amino-1-(5-phospho-beta-D-ribosyl)imidazole-4-carboxamido]succinate + ADP + phosphate + 2 H(+). It participates in purine metabolism; IMP biosynthesis via de novo pathway; 5-amino-1-(5-phospho-D-ribosyl)imidazole-4-carboxamide from 5-amino-1-(5-phospho-D-ribosyl)imidazole-4-carboxylate: step 1/2. This is Phosphoribosylaminoimidazole-succinocarboxamide synthase from Desulfotalea psychrophila (strain LSv54 / DSM 12343).